The primary structure comprises 397 residues: Yellow-related salivary protein LJM111 (397 aa).

Residues 1–18 (MKLFFFLYTFGLVQTIFG) form the signal peptide.

This sequence belongs to the major royal jelly protein family. In terms of tissue distribution, salivary gland (at protein level).

The protein localises to the secreted. In terms of biological role, probably modulates blood feeding of sand flies on vertebrate species by binding and sequestering different mediators involved in the host response. Binds biogenic amines. Binds adrenaline and noradrenaline with high affinity. Binds serotonin. Binds dopamine and octopamine. Exhibits anti-inflammatory effects in the host: reduces IL17A, TNF-alpha (TNF) and IFN-gamma (IFNG) production by host lymph node cells, suppresses expression of MHC-II and CD86, reduces TNF-alpha production and increases IL10 production, in host bone marrow-derived dendritic cells (BMDCs) stimulated by lipopolysaccharides. Reduces pain in mouse mechanical hypernociception model. This chain is Yellow-related salivary protein LJM111, found in Lutzomyia longipalpis (Sand fly).